Reading from the N-terminus, the 529-residue chain is AT hook-containing protein attf-4 (529 aa).

Disordered stretches follow at residues 1 to 39 (MLQPPTLTPNANGEEFRGSVSTDRSSASPSNIDEIMEDD), 131 to 158 (QVVHKDQQNGSSFLPSANKTSENPKPIE), 173 to 200 (GGGGGKIHTERLSEPARKQSRKVGFPPP), and 233 to 255 (VSANTSTASPGPSSEGSGDDHLE). 2 stretches are compositionally biased toward polar residues: residues 19–31 (SVSTDRSSASPSN) and 138–153 (QNGSSFLPSANKTSEN). A compositionally biased stretch (basic and acidic residues) spans 179–189 (IHTERLSEPAR). A compositionally biased stretch (low complexity) spans 233 to 248 (VSANTSTASPGPSSEG). The segment at residues 307–319 (GRGRGRPKLIGDE) is a DNA-binding region (a.T hook). The interval 436-476 (LEGGSPPASSSSTATTSTATKTVKQESKNGHQNEENLNVKQ) is disordered. The segment covering 443–455 (ASSSSTATTSTAT) has biased composition (low complexity). Basic and acidic residues predominate over residues 458 to 469 (VKQESKNGHQNE).

The sequence is that of AT hook-containing protein attf-4 from Caenorhabditis elegans.